The sequence spans 588 residues: Aspartate--tRNA ligase (588 aa).

Glu177 provides a ligand contact to L-aspartate. An aspartate region spans residues 201–204 (QLFK). Arg223 lines the L-aspartate pocket. ATP is bound by residues 223-225 (RDE) and Gln232. His451 provides a ligand contact to L-aspartate. Residue Glu485 coordinates ATP. Arg492 contacts L-aspartate. Residue 537–540 (GLDR) coordinates ATP.

Belongs to the class-II aminoacyl-tRNA synthetase family. Type 1 subfamily. Homodimer.

It is found in the cytoplasm. It catalyses the reaction tRNA(Asp) + L-aspartate + ATP = L-aspartyl-tRNA(Asp) + AMP + diphosphate. In terms of biological role, catalyzes the attachment of L-aspartate to tRNA(Asp) in a two-step reaction: L-aspartate is first activated by ATP to form Asp-AMP and then transferred to the acceptor end of tRNA(Asp). The polypeptide is Aspartate--tRNA ligase (Staphylococcus carnosus (strain TM300)).